A 431-amino-acid polypeptide reads, in one-letter code: Glutamate-1-semialdehyde 2,1-aminomutase (431 aa).

N6-(pyridoxal phosphate)lysine is present on Lys-269.

The protein belongs to the class-III pyridoxal-phosphate-dependent aminotransferase family. HemL subfamily. Homodimer. Pyridoxal 5'-phosphate is required as a cofactor.

The protein localises to the cytoplasm. It catalyses the reaction (S)-4-amino-5-oxopentanoate = 5-aminolevulinate. It functions in the pathway porphyrin-containing compound metabolism; protoporphyrin-IX biosynthesis; 5-aminolevulinate from L-glutamyl-tRNA(Glu): step 2/2. The sequence is that of Glutamate-1-semialdehyde 2,1-aminomutase from Francisella tularensis subsp. holarctica (strain FTNF002-00 / FTA).